Reading from the N-terminus, the 141-residue chain is Short-chain diamines transporter (141 aa).

Helical transmembrane passes span 16 to 36, 39 to 59, 76 to 96, and 103 to 123; these read VILL…PLEV, TLGI…NHFF, ILHA…MVAY, and WQAI…TFIF.

The protein belongs to the proteobacterial antimicrobial compound efflux (PACE) (TC 2.A.117) family.

It localises to the cell inner membrane. Its function is as follows. Mediates the efflux of short-chain diamines when energized by an electrochemical gradient. Involved in resistance to the synthetic biocide chlorhexidine, a widely used antiseptic and disinfectant in both hospital and community settings. Interacts directly with chlorhexidine and mediates its efflux via an energy-dependent mechanism. This chain is Short-chain diamines transporter, found in Acinetobacter baylyi (strain ATCC 33305 / BD413 / ADP1).